The primary structure comprises 225 residues: Perlwapin-like protein (225 aa).

A signal peptide spans 1-19; the sequence is MNHLWLFIVTVSCIYLVYG. Cystine bridges form between C27–C57, C36–C61, C43–C56, and C49–C65. In terms of domain architecture, WAP 1; atypical spans 27-68; sequence CKVKFMGTACPLGRLVCEEDGDCLGVNQVCCYDGCGTTCHNK. N67 carries N-linked (GlcNAc...) asparagine glycosylation. In terms of domain architecture, WAP 2 spans 117 to 169; sequence IIPSPELLCPVVTVRYAFCRFSTYTPCHTSNDCAVPGMKCCPDVCGKRCKFPI. Cystine bridges form between C125–C157, C135–C161, C143–C156, and C149–C165. N170 carries an N-linked (GlcNAc...) asparagine glycan. Residues 176 to 225 form a disordered region; it reads QFQQTPLKPTVPLPQYQQTPLQPTVPSSQPPLQPTVPSPQSYNYKGACST. Over residues 188-201 the composition is skewed to low complexity; that stretch reads LPQYQQTPLQPTVP. A compositionally biased stretch (pro residues) spans 203–212; the sequence is SQPPLQPTVP. The span at 213 to 225 shows a compositional bias: polar residues; it reads SPQSYNYKGACST.

In terms of tissue distribution, component of the acid-soluble organic matrix of calcified layers of the shell (at protein level).

It is found in the secreted. This is Perlwapin-like protein from Lottia gigantea (Giant owl limpet).